We begin with the raw amino-acid sequence, 100 residues long: Urease subunit gamma (100 aa).

It belongs to the urease gamma subunit family. As to quaternary structure, heterotrimer of UreA (gamma), UreB (beta) and UreC (alpha) subunits. Three heterotrimers associate to form the active enzyme.

It localises to the cytoplasm. It catalyses the reaction urea + 2 H2O + H(+) = hydrogencarbonate + 2 NH4(+). Its pathway is nitrogen metabolism; urea degradation; CO(2) and NH(3) from urea (urease route): step 1/1. The polypeptide is Urease subunit gamma (Bradyrhizobium diazoefficiens (strain JCM 10833 / BCRC 13528 / IAM 13628 / NBRC 14792 / USDA 110)).